The primary structure comprises 541 residues: Membrane protein insertase YidC (541 aa).

Helical transmembrane passes span 6-26 (NILLIGLLFVSFLLWQQWQAD), 349-369 (FVGNWGVAIILITLTVRGLLF), 420-440 (GGCLPILLQMPIFIALYWVLL), 457-477 (LSVQDPYYILPLLMGASMFVM), and 500-520 (MIFTVFFLWFPSGLVLYWLVG).

Belongs to the OXA1/ALB3/YidC family. Type 1 subfamily. As to quaternary structure, interacts with the Sec translocase complex via SecD. Specifically interacts with transmembrane segments of nascent integral membrane proteins during membrane integration.

Its subcellular location is the cell inner membrane. In terms of biological role, required for the insertion and/or proper folding and/or complex formation of integral membrane proteins into the membrane. Involved in integration of membrane proteins that insert both dependently and independently of the Sec translocase complex, as well as at least some lipoproteins. Aids folding of multispanning membrane proteins. The polypeptide is Membrane protein insertase YidC (Shewanella sp. (strain ANA-3)).